Here is a 55-residue protein sequence, read N- to C-terminus: Large ribosomal subunit protein bL33 (55 aa).

The protein belongs to the bacterial ribosomal protein bL33 family.

The chain is Large ribosomal subunit protein bL33 from Ruegeria pomeroyi (strain ATCC 700808 / DSM 15171 / DSS-3) (Silicibacter pomeroyi).